A 1031-amino-acid chain; its full sequence is Putative protein TIC 214 N-terminal part (1031 aa).

The next 6 membrane-spanning stretches (helical) occupy residues 11–31 (ILWA…LFGL), 68–88 (TLGQ…IMLL), 92–112 (AITL…KDLS), 127–147 (GIIQ…ILLP), 166–186 (SFFV…LINL), and 212–232 (TFSI…PVPF).

This sequence belongs to the TIC214 family. As to quaternary structure, part of the Tic complex.

The protein resides in the plastid. It is found in the chloroplast inner membrane. Involved in protein precursor import into chloroplasts. May be part of an intermediate translocation complex acting as a protein-conducting channel at the inner envelope. This chain is Putative protein TIC 214 N-terminal part, found in Anthoceros angustus (Hornwort).